The following is a 198-amino-acid chain: Superoxide dismutase [Fe] (198 aa).

Fe cation contacts are provided by His-27, His-74, Asp-158, and His-162.

It belongs to the iron/manganese superoxide dismutase family. In terms of assembly, homodimer. The cofactor is Fe cation.

It is found in the cytoplasm. It carries out the reaction 2 superoxide + 2 H(+) = H2O2 + O2. Its function is as follows. Destroys superoxide anion radicals which are normally produced within the cells and which are toxic to biological systems. In Plasmodium malariae, this protein is Superoxide dismutase [Fe] (SODB).